The chain runs to 1466 residues: Retrovirus-related Pol polyprotein from transposon RE1 (1466 aa).

The segment at 227–270 (SHRNTTTTNNNNNGNRNNRYDNRNNNNNSKPWQQSSTNFHPNNN) is disordered. Over residues 229–254 (RNTTTTNNNNNGNRNNRYDNRNNNNN) the composition is skewed to low complexity. A compositionally biased stretch (polar residues) spans 255–270 (SKPWQQSSTNFHPNNN). The segment at 278–294 (KCQICGVQGHSAKRCSQ) adopts a CCHC-type zinc-finger fold. The active-site For protease activity is D334. The Integrase catalytic domain maps to 519–682 (NSTRPLEYIY…SPFQKLFGTS (164 aa)). Mg(2+)-binding residues include D530 and D592. Positions 772–927 (WSPHTTLPTR…NNNQAPLNTH (156 aa)) are disordered. Composition is skewed to low complexity over residues 796–827 (AATP…SFPS) and 836–898 (QNGP…SSTS). Pro residues predominate over residues 899 to 912 (PTPPSILIHPPPPL). Residues 915 to 927 (IVNNNNQAPLNTH) are compositionally biased toward polar residues. The 244-residue stretch at 982–1225 (NHTWDLVPPP…ITAKPVTTPM (244 aa)) folds into the Reverse transcriptase Ty1/copia-type domain.

It carries out the reaction DNA(n) + a 2'-deoxyribonucleoside 5'-triphosphate = DNA(n+1) + diphosphate. The protein is Retrovirus-related Pol polyprotein from transposon RE1 (RE1) of Arabidopsis thaliana (Mouse-ear cress).